We begin with the raw amino-acid sequence, 74 residues long: Consomatin Ma1 (74 aa).

The signal sequence occupies residues 1–22 (MQTAYWVMVMMMVWITAPLSEG). Positions 23 to 57 (GKLNGEIRGLVSHILIPQHTLRSLTSRDRSDNGGS) are excised as a propeptide. A disulfide bridge links C63 with C68. W65 carries the D-tryptophan modification. P69, P70, and P72 each carry 4-hydroxyproline.

The protein belongs to the conotoxin C superfamily. Consomatin family. Expressed by the venom duct.

It localises to the secreted. Its function is as follows. Moderately activates human somatostatin receptors (SSTR) with a preferential activation of SSTR1 and SSTR4. In vivo, does not cause behavioral changes in mice within a few minutes of intracranial injection, but causes a progressive loss of movement thereafter. Four to five hours after injection, mice recover, even with the highest dose tested. Shows antinociception and antihyperalgesia activities in two mouse models of acute pain, most probably by acting outside the central nervous system. The protein is Consomatin Ma1 of Conus magus (Magical cone).